The chain runs to 233 residues: Large ribosomal subunit protein uL1 (233 aa).

It belongs to the universal ribosomal protein uL1 family. Part of the 50S ribosomal subunit.

Binds directly to 23S rRNA. The L1 stalk is quite mobile in the ribosome, and is involved in E site tRNA release. Functionally, protein L1 is also a translational repressor protein, it controls the translation of the L11 operon by binding to its mRNA. This Polynucleobacter necessarius subsp. necessarius (strain STIR1) protein is Large ribosomal subunit protein uL1.